Reading from the N-terminus, the 401-residue chain is Argininosuccinate synthase (401 aa).

9-17 (AYSGGLDTS) serves as a coordination point for ATP. An L-citrulline-binding site is contributed by Tyr-86. Gly-116 serves as a coordination point for ATP. Positions 118, 122, and 123 each coordinate L-aspartate. Residue Asn-122 coordinates L-citrulline. Positions 126, 174, 183, 259, and 271 each coordinate L-citrulline.

It belongs to the argininosuccinate synthase family. Type 1 subfamily. Homotetramer.

It is found in the cytoplasm. It catalyses the reaction L-citrulline + L-aspartate + ATP = 2-(N(omega)-L-arginino)succinate + AMP + diphosphate + H(+). Its pathway is amino-acid biosynthesis; L-arginine biosynthesis; L-arginine from L-ornithine and carbamoyl phosphate: step 2/3. The sequence is that of Argininosuccinate synthase from Bacillus mycoides (strain KBAB4) (Bacillus weihenstephanensis).